We begin with the raw amino-acid sequence, 293 residues long: Glutamyl-Q tRNA(Asp) synthetase (293 aa).

L-glutamate contacts are provided by residues Arg-8–Ser-12 and Glu-44. Positions Pro-11–Ser-21 match the 'HIGH' region motif. 4 residues coordinate Zn(2+): Cys-98, Cys-100, Tyr-120, and Cys-124. Residues Tyr-183 and Arg-201 each coordinate L-glutamate. The 'KMSKS' region motif lies at Lys-239–Gln-243. Residue Lys-242 coordinates ATP.

The protein belongs to the class-I aminoacyl-tRNA synthetase family. GluQ subfamily. Requires Zn(2+) as cofactor.

Functionally, catalyzes the tRNA-independent activation of glutamate in presence of ATP and the subsequent transfer of glutamate onto a tRNA(Asp). Glutamate is transferred on the 2-amino-5-(4,5-dihydroxy-2-cyclopenten-1-yl) moiety of the queuosine in the wobble position of the QUC anticodon. This Janthinobacterium sp. (strain Marseille) (Minibacterium massiliensis) protein is Glutamyl-Q tRNA(Asp) synthetase.